The chain runs to 432 residues: Asparagine--tRNA ligase 2 (432 aa).

It belongs to the class-II aminoacyl-tRNA synthetase family. Homodimer.

The protein localises to the cytoplasm. The enzyme catalyses tRNA(Asn) + L-asparagine + ATP = L-asparaginyl-tRNA(Asn) + AMP + diphosphate + H(+). The chain is Asparagine--tRNA ligase 2 (asnS2) from Lactiplantibacillus plantarum (strain ATCC BAA-793 / NCIMB 8826 / WCFS1) (Lactobacillus plantarum).